A 960-amino-acid polypeptide reads, in one-letter code: Semaphorin-6C (960 aa).

The first 23 residues, 1–23 (MPRAPHSMPLLLLLLLSLPQAQT), serve as a signal peptide directing secretion. Over 24 to 635 (AFPQDPIPLL…ASASRSIPIP (612 aa)) the chain is Extracellular. The Sema domain maps to 29–515 (PIPLLTSDLQ…FPGCIVYLSL (487 aa)). Asn-69 carries N-linked (GlcNAc...) asparagine glycosylation. 4 disulfides stabilise this stretch: Cys-110/Cys-120, Cys-138/Cys-147, Cys-261/Cys-372, and Cys-286/Cys-331. Asn-285 carries an N-linked (GlcNAc...) asparagine glycan. An N-linked (GlcNAc...) asparagine glycan is attached at Asn-436. 4 disulfides stabilise this stretch: Cys-478–Cys-509, Cys-518–Cys-536, Cys-524–Cys-569, and Cys-528–Cys-544. Residues 555-624 (VDLTGNQESM…HTQGVRRDLS (70 aa)) form a disordered region. The helical transmembrane segment at 636-656 (LLLACVAAAFALGASVSGLLV) threads the bilayer. The Cytoplasmic segment spans residues 657–960 (SCACRRANRR…PAPHGSHFNF (304 aa)). Disordered regions lie at residues 685-725 (LARL…SPPE), 745-792 (ASGG…PGQE), and 806-960 (HGPQ…HFNF). The span at 899–909 (RVPSGGPSRYS) shows a compositional bias: low complexity. Residues 922–935 (PDGHRGRSLKRVDV) are compositionally biased toward basic and acidic residues. Positions 940-952 (SPKPPLATPPQPA) are enriched in pro residues.

It belongs to the semaphorin family. In terms of tissue distribution, expressed in many regions of the developing nervous system, probably in neurons and their precursors, but also in nonneural tissue such as immature muscle and dermis. In adult, strong expression in the skeletal muscle and moderate expression in the brain, where cerebellum shows the highest expression. Also expressed in almost all areas of the CNS.

Its subcellular location is the cell membrane. Its function is as follows. Shows growth cone collapsing activity on dorsal root ganglion (DRG) neurons in vitro. May be a stop signal for the DRG neurons in their target areas, and possibly also for other neurons. May also be involved in the maintenance and remodeling of neuronal connections. This Rattus norvegicus (Rat) protein is Semaphorin-6C (Sema6c).